The sequence spans 289 residues: 4-hydroxy-3-methylbut-2-enyl diphosphate reductase (289 aa).

Cys13 is a binding site for [4Fe-4S] cluster. (2E)-4-hydroxy-3-methylbut-2-enyl diphosphate contacts are provided by His42 and His74. The dimethylallyl diphosphate site is built by His42 and His74. Positions 42 and 74 each coordinate isopentenyl diphosphate. Cys96 provides a ligand contact to [4Fe-4S] cluster. (2E)-4-hydroxy-3-methylbut-2-enyl diphosphate is bound at residue His124. His124 contacts dimethylallyl diphosphate. His124 provides a ligand contact to isopentenyl diphosphate. The active-site Proton donor is Glu126. Residue Thr165 participates in (2E)-4-hydroxy-3-methylbut-2-enyl diphosphate binding. Cys193 lines the [4Fe-4S] cluster pocket. (2E)-4-hydroxy-3-methylbut-2-enyl diphosphate-binding residues include Ser221, Asn223, and Ser265. Dimethylallyl diphosphate is bound by residues Ser221, Asn223, and Ser265. Ser221, Asn223, and Ser265 together coordinate isopentenyl diphosphate.

It belongs to the IspH family. [4Fe-4S] cluster serves as cofactor.

It catalyses the reaction isopentenyl diphosphate + 2 oxidized [2Fe-2S]-[ferredoxin] + H2O = (2E)-4-hydroxy-3-methylbut-2-enyl diphosphate + 2 reduced [2Fe-2S]-[ferredoxin] + 2 H(+). The catalysed reaction is dimethylallyl diphosphate + 2 oxidized [2Fe-2S]-[ferredoxin] + H2O = (2E)-4-hydroxy-3-methylbut-2-enyl diphosphate + 2 reduced [2Fe-2S]-[ferredoxin] + 2 H(+). The protein operates within isoprenoid biosynthesis; dimethylallyl diphosphate biosynthesis; dimethylallyl diphosphate from (2E)-4-hydroxy-3-methylbutenyl diphosphate: step 1/1. Its pathway is isoprenoid biosynthesis; isopentenyl diphosphate biosynthesis via DXP pathway; isopentenyl diphosphate from 1-deoxy-D-xylulose 5-phosphate: step 6/6. With respect to regulation, highly sensitive to dioxygen. In terms of biological role, catalyzes the conversion of 1-hydroxy-2-methyl-2-(E)-butenyl 4-diphosphate (HMBPP) into a mixture of isopentenyl diphosphate (IPP) and dimethylallyl diphosphate (DMAPP). Acts in the terminal step of the DOXP/MEP pathway for isoprenoid precursor biosynthesis. The protein is 4-hydroxy-3-methylbut-2-enyl diphosphate reductase of Aquifex aeolicus (strain VF5).